The chain runs to 354 residues: Ion-translocating oxidoreductase complex subunit D (354 aa).

3 helical membrane passes run 9-28, 67-87, and 117-137; these read IMLH…LYLF, LLSG…WIAV, and VALL…LPLG. At T165 the chain carries FMN phosphoryl threonine. Helical transmembrane passes span 200–220, 222–242, 249–269, 277–297, and 301–321; these read GSLG…LLAL, IIHW…AALA, VHGG…ALFI, PISR…VFVI, and GNFP…VPLI.

Belongs to the NqrB/RnfD family. In terms of assembly, the complex is composed of six subunits: RnfA, RnfB, RnfC, RnfD, RnfE and RnfG. FMN serves as cofactor.

It localises to the cell inner membrane. Its function is as follows. Part of a membrane-bound complex that couples electron transfer with translocation of ions across the membrane. This Stutzerimonas stutzeri (Pseudomonas stutzeri) protein is Ion-translocating oxidoreductase complex subunit D.